A 389-amino-acid polypeptide reads, in one-letter code: D-alanyl-D-alanine carboxypeptidase DacF (389 aa).

The N-terminal stretch at 1-23 (MKRLLSTLLIGIMLLTFAPSAFA) is a signal peptide. Serine 64 (acyl-ester intermediate) is an active-site residue. Catalysis depends on lysine 67, which acts as the Proton acceptor. Serine 124 is a catalytic residue. Lysine 230 lines the substrate pocket.

It belongs to the peptidase S11 family.

The protein localises to the secreted. The enzyme catalyses Preferential cleavage: (Ac)2-L-Lys-D-Ala-|-D-Ala. Also transpeptidation of peptidyl-alanyl moieties that are N-acyl substituents of D-alanine.. It functions in the pathway cell wall biogenesis; peptidoglycan biosynthesis. Removes C-terminal D-alanyl residues from sugar-peptide cell wall precursors. This chain is D-alanyl-D-alanine carboxypeptidase DacF (dacF), found in Bacillus subtilis (strain 168).